The chain runs to 230 residues: Uracil-DNA glycosylase (230 aa).

Asp72 serves as the catalytic Proton acceptor.

The protein belongs to the uracil-DNA glycosylase (UDG) superfamily. UNG family.

Its subcellular location is the cytoplasm. It carries out the reaction Hydrolyzes single-stranded DNA or mismatched double-stranded DNA and polynucleotides, releasing free uracil.. Functionally, excises uracil residues from the DNA which can arise as a result of misincorporation of dUMP residues by DNA polymerase or due to deamination of cytosine. This is Uracil-DNA glycosylase from Wolinella succinogenes (strain ATCC 29543 / DSM 1740 / CCUG 13145 / JCM 31913 / LMG 7466 / NCTC 11488 / FDC 602W) (Vibrio succinogenes).